The primary structure comprises 131 residues: Translation initiation factor 5A (131 aa).

Lys-37 is modified (hypusine).

It belongs to the eIF-5A family.

The protein resides in the cytoplasm. Functionally, functions by promoting the formation of the first peptide bond. The sequence is that of Translation initiation factor 5A (eIF5A) from Methanococcus aeolicus (strain ATCC BAA-1280 / DSM 17508 / OCM 812 / Nankai-3).